Reading from the N-terminus, the 594-residue chain is Actin-histidine N-methyltransferase (594 aa).

A disordered region spans residues 1 to 23 (MGKKSRVKTQKSGTGATASVSPK). The segment covering 10-23 (QKSGTGATASVSPK) has biased composition (polar residues). S-adenosyl-L-methionine-binding positions include Arg-75, 104 to 106 (EGF), Arg-254, 275 to 279 (DMCNH), and 325 to 327 (SGF). The SET domain maps to 94-314 (EGFEMVSFKE…AGEQIYIFYG (221 aa)). The disordered stretch occupies residues 553–594 (INGENSIPNGTRLEKEDLNQEQSKRVTEDAKEPSDSTEEVKE). Positions 564 to 594 (RLEKEDLNQEQSKRVTEDAKEPSDSTEEVKE) are enriched in basic and acidic residues.

Belongs to the class V-like SAM-binding methyltransferase superfamily. SETD3 actin-histidine methyltransferase family. In terms of assembly, interacts with MYOD1. In terms of processing, phosphorylated by GSK3B, which is required for recognition by the SCF(FBXW7) complex and subsequent degradation. Post-translationally, ubiquitinated by the SCF(FBXW7) complex following phosphorylation by GSK3B, leading to its degradation by the proteasome.

Its subcellular location is the cytoplasm. The protein localises to the nucleus. The enzyme catalyses L-histidyl-[protein] + S-adenosyl-L-methionine = N(tele)-methyl-L-histidyl-[protein] + S-adenosyl-L-homocysteine + H(+). Its function is as follows. Protein-histidine N-methyltransferase that specifically mediates 3-methylhistidine (tele-methylhistidine) methylation of actin at 'His-73'. Histidine methylation of actin is required for smooth muscle contraction of the laboring uterus during delivery. Does not have protein-lysine N-methyltransferase activity and probably only catalyzes histidine methylation of actin. The protein is Actin-histidine N-methyltransferase of Rhinolophus ferrumequinum (Greater horseshoe bat).